Reading from the N-terminus, the 174-residue chain is Chaperonin-like RBCX protein 1, chloroplastic (174 aa).

The N-terminal 45 residues, 1-45 (MESSSSLLHHSYLSYLNPKFGKRPLVSYPLMQSSRKCKQTRICSN), are a transit peptide targeting the chloroplast.

It belongs to the RbcX family. Homodimer. Interacts with rbcL, atpB and THI1.

The protein resides in the plastid. The protein localises to the chloroplast. Its function is as follows. Chaperone involved in RuBisCO assembly process. The sequence is that of Chaperonin-like RBCX protein 1, chloroplastic from Arabidopsis thaliana (Mouse-ear cress).